The chain runs to 153 residues: Aspartate carbamoyltransferase regulatory chain (153 aa).

Residues cysteine 109, cysteine 114, cysteine 138, and cysteine 141 each contribute to the Zn(2+) site.

This sequence belongs to the PyrI family. As to quaternary structure, contains catalytic and regulatory chains. It depends on Zn(2+) as a cofactor.

In terms of biological role, involved in allosteric regulation of aspartate carbamoyltransferase. This chain is Aspartate carbamoyltransferase regulatory chain, found in Vibrio parahaemolyticus serotype O3:K6 (strain RIMD 2210633).